We begin with the raw amino-acid sequence, 345 residues long: NADH-quinone oxidoreductase subunit H (345 aa).

8 helical membrane-spanning segments follow: residues 13 to 33, 84 to 104, 115 to 135, 161 to 181, 190 to 210, 248 to 268, 278 to 298, and 309 to 329; these read VLIIAQCLAVLGFVMVSLLFL, FMLAPMTSFVLAMIAWAVIPF, VAILYVFAVSSLEVYGVIMGG, IGLIIIGVILSTGSMNFSAIV, FFSWYWLPHLPMVFLFFISAL, YIAIFLMCALITLLFFGGWLS, IWMVGKMAFFFFLFAMVKAIV, and LGWKVFLPFSLAWVVFVAFAA.

It belongs to the complex I subunit 1 family. In terms of assembly, NDH-1 is composed of 14 different subunits. Subunits NuoA, H, J, K, L, M, N constitute the membrane sector of the complex.

It localises to the cell inner membrane. It carries out the reaction a quinone + NADH + 5 H(+)(in) = a quinol + NAD(+) + 4 H(+)(out). NDH-1 shuttles electrons from NADH, via FMN and iron-sulfur (Fe-S) centers, to quinones in the respiratory chain. The immediate electron acceptor for the enzyme in this species is believed to be ubiquinone. Couples the redox reaction to proton translocation (for every two electrons transferred, four hydrogen ions are translocated across the cytoplasmic membrane), and thus conserves the redox energy in a proton gradient. This subunit may bind ubiquinone. The polypeptide is NADH-quinone oxidoreductase subunit H (Dinoroseobacter shibae (strain DSM 16493 / NCIMB 14021 / DFL 12)).